The sequence spans 482 residues: 2-succinylbenzoate--CoA ligase (482 aa).

It belongs to the ATP-dependent AMP-binding enzyme family. MenE subfamily.

The catalysed reaction is 2-succinylbenzoate + ATP + CoA = 2-succinylbenzoyl-CoA + AMP + diphosphate. The protein operates within quinol/quinone metabolism; 1,4-dihydroxy-2-naphthoate biosynthesis; 1,4-dihydroxy-2-naphthoate from chorismate: step 5/7. It participates in quinol/quinone metabolism; menaquinone biosynthesis. In terms of biological role, converts 2-succinylbenzoate (OSB) to 2-succinylbenzoyl-CoA (OSB-CoA). This Bacillus cereus (strain ATCC 14579 / DSM 31 / CCUG 7414 / JCM 2152 / NBRC 15305 / NCIMB 9373 / NCTC 2599 / NRRL B-3711) protein is 2-succinylbenzoate--CoA ligase.